The sequence spans 269 residues: 2-keto-4-pentenoate hydratase (269 aa).

This sequence belongs to the hydratase/decarboxylase family. MhpD subfamily. A divalent metal cation serves as cofactor.

It catalyses the reaction (S)-4-hydroxy-2-oxopentanoate = (2Z)-2-hydroxypenta-2,4-dienoate + H2O. It participates in aromatic compound metabolism; 3-phenylpropanoate degradation. Functionally, catalyzes the conversion of 2-hydroxypentadienoic acid (enolic form of 2-oxopent-4-enoate) to 4-hydroxy-2-ketopentanoic acid. The sequence is that of 2-keto-4-pentenoate hydratase from Paraburkholderia xenovorans (strain LB400).